The chain runs to 423 residues: Gamma-glutamyl phosphate reductase (423 aa).

The protein belongs to the gamma-glutamyl phosphate reductase family.

The protein localises to the cytoplasm. It carries out the reaction L-glutamate 5-semialdehyde + phosphate + NADP(+) = L-glutamyl 5-phosphate + NADPH + H(+). Its pathway is amino-acid biosynthesis; L-proline biosynthesis; L-glutamate 5-semialdehyde from L-glutamate: step 2/2. Functionally, catalyzes the NADPH-dependent reduction of L-glutamate 5-phosphate into L-glutamate 5-semialdehyde and phosphate. The product spontaneously undergoes cyclization to form 1-pyrroline-5-carboxylate. The chain is Gamma-glutamyl phosphate reductase from Burkholderia lata (strain ATCC 17760 / DSM 23089 / LMG 22485 / NCIMB 9086 / R18194 / 383).